The following is a 310-amino-acid chain: UPF0761 membrane protein VFMJ11_0098 (310 aa).

The next 6 membrane-spanning stretches (helical) occupy residues 34 to 54 (YMAYITLLSLVPLITVLLSVL), 97 to 117 (MTAVGSGFLFVASVMLISSID), 136 to 156 (FSLYWMILTLGPLLVGASLAA), 178 to 198 (LLGWLPIILSFSAFVGLYLLV), 207 to 227 (HALIGAMSAGCLFEFSKVGFA), and 242 to 262 (ALAAVPILFVWVYLCWIIVLI).

It belongs to the UPF0761 family.

It is found in the cell inner membrane. The polypeptide is UPF0761 membrane protein VFMJ11_0098 (Aliivibrio fischeri (strain MJ11) (Vibrio fischeri)).